A 731-amino-acid chain; its full sequence is Elongation factor 2 (731 aa).

Positions 19 to 234 (EYIRNIGICA…DIIDYCNEGK (216 aa)) constitute a tr-type G domain. Residues 28–35 (AHIDHGKT), 94–98 (DTPGH), and 148–151 (NKVD) contribute to the GTP site. Histidine 598 is subject to Diphthamide.

Belongs to the TRAFAC class translation factor GTPase superfamily. Classic translation factor GTPase family. EF-G/EF-2 subfamily.

It is found in the cytoplasm. Its function is as follows. Catalyzes the GTP-dependent ribosomal translocation step during translation elongation. During this step, the ribosome changes from the pre-translocational (PRE) to the post-translocational (POST) state as the newly formed A-site-bound peptidyl-tRNA and P-site-bound deacylated tRNA move to the P and E sites, respectively. Catalyzes the coordinated movement of the two tRNA molecules, the mRNA and conformational changes in the ribosome. This is Elongation factor 2 from Methanobrevibacter ruminantium (strain ATCC 35063 / DSM 1093 / JCM 13430 / OCM 146 / M1) (Methanobacterium ruminantium).